The chain runs to 138 residues: Acidic phospholipase A2 BITP01A (138 aa).

The first 16 residues, 1-16 (MRTLWIMAVLLVGVEG), serve as a signal peptide directing secretion. Intrachain disulfides connect Cys42–Cys131, Cys44–Cys60, Cys59–Cys111, Cys65–Cys138, Cys66–Cys104, Cys73–Cys97, and Cys91–Cys102. Ca(2+) is bound by residues Tyr43, Gly45, and Gly47. Residue His63 is part of the active site. Asp64 is a binding site for Ca(2+). Asp105 is an active-site residue.

Ca(2+) is required as a cofactor. Expressed by the venom gland.

It is found in the secreted. It catalyses the reaction a 1,2-diacyl-sn-glycero-3-phosphocholine + H2O = a 1-acyl-sn-glycero-3-phosphocholine + a fatty acid + H(+). Snake venom phospholipase A2 (PLA2) that induces edema in mice, produces neuromuscular blockade in chick biventer cervicis, increases CK release and produces myonecrosis. PLA2 catalyzes the calcium-dependent hydrolysis of the 2-acyl groups in 3-sn-phosphoglycerides. The sequence is that of Acidic phospholipase A2 BITP01A from Bothrops insularis (Golden lancehead).